The chain runs to 265 residues: Phosphonates import ATP-binding protein PhnC 1 (265 aa).

An ABC transporter domain is found at 3–247 (LRLSAIDLRH…HLDTLYANEQ (245 aa)). 36–43 (GPSGAGKT) is a binding site for ATP.

This sequence belongs to the ABC transporter superfamily. Phosphonates importer (TC 3.A.1.9.1) family. In terms of assembly, the complex is composed of two ATP-binding proteins (PhnC), two transmembrane proteins (PhnE) and a solute-binding protein (PhnD).

The protein localises to the cell inner membrane. The enzyme catalyses phosphonate(out) + ATP + H2O = phosphonate(in) + ADP + phosphate + H(+). In terms of biological role, part of the ABC transporter complex PhnCDE involved in phosphonates import. Responsible for energy coupling to the transport system. The polypeptide is Phosphonates import ATP-binding protein PhnC 1 (Pseudomonas syringae pv. tomato (strain ATCC BAA-871 / DC3000)).